An 85-amino-acid polypeptide reads, in one-letter code: MFQKEIKINALHGLHTRPAAEFVKEAKNFISDIHIIYHGKSVNAKSLFKIQTLGLVKDSVIILSAEGEDEKKAVEHLSKIMTELE.

In terms of domain architecture, HPr spans 1–85; sequence MFQKEIKINA…HLSKIMTELE (85 aa). Residue H15 is the Pros-phosphohistidine intermediate of the active site.

Belongs to the HPr family.

It localises to the cytoplasm. Functionally, general (non sugar-specific) component of the phosphoenolpyruvate-dependent sugar phosphotransferase system (sugar PTS). This major carbohydrate active-transport system catalyzes the phosphorylation of incoming sugar substrates concomitantly with their translocation across the cell membrane. The phosphoryl group from phosphoenolpyruvate (PEP) is transferred to the phosphoryl carrier protein HPr by enzyme I. Phospho-HPr then transfers it to the PTS EIIA domain. The polypeptide is Phosphocarrier protein HPr (ptsH) (Buchnera aphidicola subsp. Schizaphis graminum (strain Sg)).